Reading from the N-terminus, the 413-residue chain is MEKYTVCLCGDCINKKNFLKHCQVIDNNCYIAISNELVDIKFDEYIEHGEFFGEKFYQKSHCIMIDFENILKFNSFMADNKLFTVISHCETPCNYSRFVINYLEYITKNNIINHIKYFLKNDYFNNIRWNCHLREKIFKYSNVSTIRSCLKYLPIEYIGEYFSYSLFRGDNIILDYLVDKIKIYLTSYFTGKKYKGNMFKITNKDKLIDISNIYTRLYNIIYYNKKNENIIEIYNQIINRFQELLESQENINVKKKLIFKHNELKLKLTYNEKVKNRLLGNILVYLNGKPSLIVKQLLMDGVNIHTINRDNGFTFLDYFIKIIIKKKNLDLLDILFEMKLIDQSKLNLILEKSIPPIDFKNDTELEIDKNFIRELSGYGADVDKCFDELIKTAKYYNNNKLVGYLKNLGDDLM.

Belongs to the mimivirus L17x/L18x family.

This is an uncharacterized protein from Acanthamoeba polyphaga (Amoeba).